Reading from the N-terminus, the 127-residue chain is uncharacterized protein (127 aa).

3 helical membrane-spanning segments follow: residues 20–42, 54–76, and 91–110; these read NMIW…FMSS, IYFC…IFVY, and WILI…ASFT.

It localises to the membrane. It is found in the cytoplasm. This is an uncharacterized protein from Schizosaccharomyces pombe (strain 972 / ATCC 24843) (Fission yeast).